A 530-amino-acid polypeptide reads, in one-letter code: Na(+)/H(+) antiporter NhaB (530 aa).

11 consecutive transmembrane segments (helical) span residues 23 to 43, 45 to 65, 90 to 110, 113 to 133, 140 to 160, 205 to 225, 238 to 258, 308 to 328, 351 to 371, 451 to 471, and 479 to 499; these read VAII…NPFL, GWLL…CYPL, LVAN…IYFM, LLLF…LLSI, AFLS…SVAV, LLMH…VGEP, FGEF…AGML, IAVW…LIGL, EEAL…AVII, ATPN…APLI, and VIMA…GIMF.

The protein belongs to the NhaB Na(+)/H(+) (TC 2.A.34) antiporter family.

The protein resides in the cell inner membrane. It carries out the reaction 2 Na(+)(in) + 3 H(+)(out) = 2 Na(+)(out) + 3 H(+)(in). In terms of biological role, na(+)/H(+) antiporter that extrudes sodium in exchange for external protons. This Vibrio cholerae serotype O1 (strain ATCC 39541 / Classical Ogawa 395 / O395) protein is Na(+)/H(+) antiporter NhaB.